The following is a 305-amino-acid chain: Ribosomal large subunit pseudouridine synthase C (305 aa).

The 60-residue stretch at 11 to 70 (SRLDKYLKRLYPLLTQGVIEKALRQKQITVNSQKAEASLRVKGGDKIFINDKFNLPVKQP) folds into the S4 RNA-binding domain. Asp140 is a catalytic residue.

Belongs to the pseudouridine synthase RluA family.

The catalysed reaction is uridine(955/2504/2580) in 23S rRNA = pseudouridine(955/2504/2580) in 23S rRNA. Functionally, responsible for synthesis of pseudouridine from uracil at positions 955, 2504 and 2580 in 23S ribosomal RNA. This Rickettsia felis (strain ATCC VR-1525 / URRWXCal2) (Rickettsia azadi) protein is Ribosomal large subunit pseudouridine synthase C (rluC).